The chain runs to 416 residues: Tyrosine--tRNA ligase (416 aa).

Tyr40 is a binding site for L-tyrosine. The 'HIGH' region signature appears at 45 to 54 (ATAASLHVGH). Positions 177 and 181 each coordinate L-tyrosine. A 'KMSKS' region motif is present at residues 237 to 241 (KMGKS). Residue Lys240 participates in ATP binding. In terms of domain architecture, S4 RNA-binding spans 351 to 416 (LSVAHFLVAA…RKKHKLVRLS (66 aa)).

It belongs to the class-I aminoacyl-tRNA synthetase family. TyrS type 1 subfamily. Homodimer.

The protein resides in the cytoplasm. It catalyses the reaction tRNA(Tyr) + L-tyrosine + ATP = L-tyrosyl-tRNA(Tyr) + AMP + diphosphate + H(+). In terms of biological role, catalyzes the attachment of tyrosine to tRNA(Tyr) in a two-step reaction: tyrosine is first activated by ATP to form Tyr-AMP and then transferred to the acceptor end of tRNA(Tyr). In Cereibacter sphaeroides (strain KD131 / KCTC 12085) (Rhodobacter sphaeroides), this protein is Tyrosine--tRNA ligase.